The chain runs to 94 residues: Small ribosomal subunit protein bS16c (94 aa).

It belongs to the bacterial ribosomal protein bS16 family.

It localises to the plastid. The protein resides in the chloroplast. This chain is Small ribosomal subunit protein bS16c, found in Phalaenopsis aphrodite subsp. formosana (Moth orchid).